Here is a 431-residue protein sequence, read N- to C-terminus: Argininosuccinate lyase (431 aa).

The protein belongs to the lyase 1 family. Argininosuccinate lyase subfamily.

Its subcellular location is the cytoplasm. It carries out the reaction 2-(N(omega)-L-arginino)succinate = fumarate + L-arginine. The protein operates within amino-acid biosynthesis; L-arginine biosynthesis; L-arginine from L-ornithine and carbamoyl phosphate: step 3/3. In Xanthomonas oryzae pv. oryzae (strain MAFF 311018), this protein is Argininosuccinate lyase.